Here is a 294-residue protein sequence, read N- to C-terminus: Nucleotide-binding protein NT01CX_1284 (294 aa).

Residue 8–15 coordinates ATP; sequence GLSGAGKS. Residue 59–62 coordinates GTP; the sequence is DIRG.

Belongs to the RapZ-like family.

Displays ATPase and GTPase activities. The chain is Nucleotide-binding protein NT01CX_1284 from Clostridium novyi (strain NT).